Reading from the N-terminus, the 77-residue chain is Small ribosomal subunit protein bS18 (77 aa).

It belongs to the bacterial ribosomal protein bS18 family. In terms of assembly, part of the 30S ribosomal subunit. Forms a tight heterodimer with protein bS6.

Its function is as follows. Binds as a heterodimer with protein bS6 to the central domain of the 16S rRNA, where it helps stabilize the platform of the 30S subunit. This Desulforamulus reducens (strain ATCC BAA-1160 / DSM 100696 / MI-1) (Desulfotomaculum reducens) protein is Small ribosomal subunit protein bS18.